We begin with the raw amino-acid sequence, 375 residues long: 2-oxoglutarate synthase subunit KorA (375 aa).

In terms of assembly, heterotetramer of the KorA, KorB, KorC and KorD subunits.

The enzyme catalyses 2 oxidized [2Fe-2S]-[ferredoxin] + 2-oxoglutarate + CoA = succinyl-CoA + 2 reduced [2Fe-2S]-[ferredoxin] + CO2 + H(+). The chain is 2-oxoglutarate synthase subunit KorA (korA) from Methanothermobacter marburgensis (strain ATCC BAA-927 / DSM 2133 / JCM 14651 / NBRC 100331 / OCM 82 / Marburg) (Methanobacterium thermoautotrophicum).